The primary structure comprises 531 residues: Phosphoinositide phospholipase C 9 (531 aa).

One can recognise a PI-PLC X-box domain in the interval 107 to 253 (RDMNAPLSHY…LQNKILISRR (147 aa)). One can recognise a PI-PLC Y-box domain in the interval 265–385 (ENGVELEIQE…GYVKKPNFLL (121 aa)). The residue at position 276 (S276) is a Phosphoserine. Positions 386 to 513 (NAGSSGVFYP…EGIRAVPLYD (128 aa)) constitute a C2 domain.

Ca(2+) is required as a cofactor. Expressed in leaves, roots, flowers and siliques.

It is found in the cell membrane. The catalysed reaction is a 1,2-diacyl-sn-glycero-3-phospho-(1D-myo-inositol-4,5-bisphosphate) + H2O = 1D-myo-inositol 1,4,5-trisphosphate + a 1,2-diacyl-sn-glycerol + H(+). In terms of biological role, the production of the second messenger molecules diacylglycerol (DAG) and inositol 1,4,5-trisphosphate (IP3) is mediated by activated phosphatidylinositol-specific phospholipase C enzymes. This is Phosphoinositide phospholipase C 9 (PLC9) from Arabidopsis thaliana (Mouse-ear cress).